A 781-amino-acid chain; its full sequence is Dynamin-related protein dnm1 (781 aa).

Residues 23–328 (FLDLPSIVVV…LVSHIRERLP (306 aa)) form the Dynamin-type G domain. Positions 33–40 (GSQSCGKS) are G1 motif. 33 to 40 (GSQSCGKS) is a binding site for GTP. The interval 59-61 (VTR) is G2 motif. Positions 76–103 (KNNHDEESTSDNNSEETSAAGETGSLEG) are disordered. Residues 170 to 173 (DLPG) form a G3 motif region. GTP contacts are provided by residues 170–174 (DLPGL) and 239–242 (TKLD). Residues 239–242 (TKLD) form a G4 motif region. The interval 269-272 (VNRS) is G5 motif. Residues 694–781 (VDLIKELITS…QANKIISTVF (88 aa)) enclose the GED domain.

It belongs to the TRAFAC class dynamin-like GTPase superfamily. Dynamin/Fzo/YdjA family.

It is found in the cytoplasm. The protein localises to the mitochondrion outer membrane. It catalyses the reaction GTP + H2O = GDP + phosphate + H(+). Functionally, microtubule-associated force-producing protein that mediates mitochondrial fission during interphasic growth and at cell division. Fission of mitochondria occurs in many cell types and constitutes an important step in mitochondria morphology, which is balanced between fusion and fission. With vps1, acts redundantly in peroxisome biogenesis, which is under cell cycle control. This chain is Dynamin-related protein dnm1 (dnm1), found in Schizosaccharomyces pombe (strain 972 / ATCC 24843) (Fission yeast).